We begin with the raw amino-acid sequence, 320 residues long: Aspartate carbamoyltransferase catalytic subunit (320 aa).

Positions 68 and 69 each coordinate carbamoyl phosphate. K96 provides a ligand contact to L-aspartate. Carbamoyl phosphate is bound by residues R118, H148, and Q151. Positions 181 and 236 each coordinate L-aspartate. 2 residues coordinate carbamoyl phosphate: G277 and P278.

The protein belongs to the aspartate/ornithine carbamoyltransferase superfamily. ATCase family. In terms of assembly, heterododecamer (2C3:3R2) of six catalytic PyrB chains organized as two trimers (C3), and six regulatory PyrI chains organized as three dimers (R2).

It carries out the reaction carbamoyl phosphate + L-aspartate = N-carbamoyl-L-aspartate + phosphate + H(+). Its pathway is pyrimidine metabolism; UMP biosynthesis via de novo pathway; (S)-dihydroorotate from bicarbonate: step 2/3. Catalyzes the condensation of carbamoyl phosphate and aspartate to form carbamoyl aspartate and inorganic phosphate, the committed step in the de novo pyrimidine nucleotide biosynthesis pathway. The sequence is that of Aspartate carbamoyltransferase catalytic subunit from Delftia acidovorans (strain DSM 14801 / SPH-1).